Reading from the N-terminus, the 99-residue chain is Aspartyl/glutamyl-tRNA(Asn/Gln) amidotransferase subunit C (99 aa).

This sequence belongs to the GatC family. As to quaternary structure, heterotrimer of A, B and C subunits.

The enzyme catalyses L-glutamyl-tRNA(Gln) + L-glutamine + ATP + H2O = L-glutaminyl-tRNA(Gln) + L-glutamate + ADP + phosphate + H(+). It carries out the reaction L-aspartyl-tRNA(Asn) + L-glutamine + ATP + H2O = L-asparaginyl-tRNA(Asn) + L-glutamate + ADP + phosphate + 2 H(+). Its function is as follows. Allows the formation of correctly charged Asn-tRNA(Asn) or Gln-tRNA(Gln) through the transamidation of misacylated Asp-tRNA(Asn) or Glu-tRNA(Gln) in organisms which lack either or both of asparaginyl-tRNA or glutaminyl-tRNA synthetases. The reaction takes place in the presence of glutamine and ATP through an activated phospho-Asp-tRNA(Asn) or phospho-Glu-tRNA(Gln). The polypeptide is Aspartyl/glutamyl-tRNA(Asn/Gln) amidotransferase subunit C (Mycobacterium marinum (strain ATCC BAA-535 / M)).